The sequence spans 163 residues: Lysosomal enzyme trafficking factor (163 aa).

2 consecutive transmembrane segments (helical) span residues 40-60 and 98-118; these read MGWI…YYVF and LPFW…FLFL.

This sequence belongs to the LYSET family. In terms of assembly, interacts with GNPTAB; this interaction is important for proper localization of GNPTAB in Golgi stacks. Interacts with MBTPS1.

It is found in the golgi apparatus membrane. Required for mannose-6-phosphate-dependent trafficking of lysosomal enzymes. LYSET bridges GlcNAc-1-phosphate transferase (GNPTAB), to the membrane-bound transcription factor site-1 protease (MBTPS1), thus allowing proteolytic activation of the GNPTAB. GNPTAB is involved in the regulation of M6P-dependent Golgi-to-lysosome trafficking of lysosomal enzymes. LYSET is thus an essential factor for maturation and delivery of lysosomal hydrolases. This is Lysosomal enzyme trafficking factor (LYSET) from Bos taurus (Bovine).